The sequence spans 358 residues: MFGGVKWSPQSWMSDTRSSIEKKCIGQVYMVGAHNAGTHGIQMFSPFGLDAPEKLRSLPPYVTFLLRFLTVGVSSRWGRCQNLSIRQLLDHGVRYLDLRMNISPDQENKIYTTHFHISVPLQEVLKDVKDFLTTPASANEFVILDFLHFYGFNESHTMKRFVEELQALEEFYIPTTVSLTTPLCNLWQSTRRIFLVVRPYVEYPYARLRSVALKSIWVNQMELNDLLDRLEELMTRDLEDVSIGGVPSKMYVTQAIGTPRNNDFAVAACCGACPGSHPDLYSAAKHKNPHLLKWFYDLNVNGVMRGERVTIRRGNNTHGNILLLDFVQEGTCTVKGVDKPMNAVALCVHLNTNQTARS.

The 174-residue stretch at 25–198 folds into the PI-PLC X-box domain; it reads IGQVYMVGAH…STRRIFLVVR (174 aa).

Monomer. Post-translationally, the N-terminus is blocked.

It is found in the membrane. It catalyses the reaction a 6-(alpha-D-glucosaminyl)-1-(1,2-diacyl-sn-glycero-3-phospho)-1D-myo-inositol = 6-(alpha-D-glucosaminyl)-1D-myo-inositol 1,2-cyclic phosphate + a 1,2-diacyl-sn-glycerol. In terms of biological role, by hydrolysis of the attached glycolipid, releases soluble variant surface glycoprotein containing phosphoinositol from the cell wall of T.brucei after cell lysis. It also cleaves similar membrane anchors on some mammalian proteins. VSG lipase may play a role in processes such as parasite differentiation or antigenic variation. This Trypanosoma brucei brucei protein is Variant-surface-glycoprotein phospholipase C.